The following is a 550-amino-acid chain: Hydroxylamine reductase (550 aa).

Residues cysteine 3, cysteine 6, cysteine 18, and cysteine 25 each contribute to the [2Fe-2S] cluster site. The hybrid [4Fe-2O-2S] cluster site is built by histidine 249, glutamate 273, cysteine 317, cysteine 405, cysteine 433, cysteine 458, glutamate 492, and lysine 494. Cysteine 405 bears the Cysteine persulfide mark.

Belongs to the HCP family. It depends on [2Fe-2S] cluster as a cofactor. The cofactor is hybrid [4Fe-2O-2S] cluster.

It localises to the cytoplasm. The enzyme catalyses A + NH4(+) + H2O = hydroxylamine + AH2 + H(+). Its function is as follows. Catalyzes the reduction of hydroxylamine to form NH(3) and H(2)O. The sequence is that of Hydroxylamine reductase from Salmonella enteritidis PT4 (strain P125109).